An 843-amino-acid chain; its full sequence is Protein P (843 aa).

The terminal protein domain (TP) stretch occupies residues 1 to 177 (MPLSYQHFRK…FCGSPYSWEQ (177 aa)). The segment at 178-346 (DLQHGRLVFQ…YCLCHIVNLI (169 aa)) is spacer. Disordered stretches follow at residues 220–258 (KSRL…VGVE) and 292–319 (SKGH…SQGS). Residues 308–319 (PPNSSRSQSQGS) are compositionally biased toward low complexity. A polymerase/reverse transcriptase domain (RT) region spans residues 347–690 (DDWGPCAEHG…YLNLYPVARQ (344 aa)). A Reverse transcriptase domain is found at 357–600 (EHRIRTPRTP…YSLNFMGYVI (244 aa)). Residues Asp-429, Asp-551, and Asp-552 each contribute to the Mg(2+) site.

This sequence belongs to the hepadnaviridae P protein family.

The enzyme catalyses DNA(n) + a 2'-deoxyribonucleoside 5'-triphosphate = DNA(n+1) + diphosphate. It carries out the reaction Endonucleolytic cleavage to 5'-phosphomonoester.. With respect to regulation, activated by host HSP70 and HSP40 in vitro to be able to bind the epsilon loop of the pgRNA. Because deletion of the RNase H region renders the protein partly chaperone-independent, the chaperones may be needed indirectly to relieve occlusion of the RNA-binding site by this domain. Inhibited by several reverse-transcriptase inhibitors: Lamivudine, Adefovir and Entecavir. Its function is as follows. Multifunctional enzyme that converts the viral RNA genome into dsDNA in viral cytoplasmic capsids. This enzyme displays a DNA polymerase activity that can copy either DNA or RNA templates, and a ribonuclease H (RNase H) activity that cleaves the RNA strand of RNA-DNA heteroduplexes in a partially processive 3'- to 5'-endonucleasic mode. Neo-synthesized pregenomic RNA (pgRNA) are encapsidated together with the P protein, and reverse-transcribed inside the nucleocapsid. Initiation of reverse-transcription occurs first by binding the epsilon loop on the pgRNA genome, and is initiated by protein priming, thereby the 5'-end of (-)DNA is covalently linked to P protein. Partial (+)DNA is synthesized from the (-)DNA template and generates the relaxed circular DNA (RC-DNA) genome. After budding and infection, the RC-DNA migrates in the nucleus, and is converted into a plasmid-like covalently closed circular DNA (cccDNA). The activity of P protein does not seem to be necessary for cccDNA generation, and is presumably released from (+)DNA by host nuclear DNA repair machinery. The polypeptide is Protein P (Hepatitis B virus genotype B1 (isolate Japan/Yamagata-2/1998) (HBV-B)).